A 209-amino-acid polypeptide reads, in one-letter code: Uridine kinase (209 aa).

12–19 provides a ligand contact to ATP; sequence GGSGGGKT.

This sequence belongs to the uridine kinase family.

The protein resides in the cytoplasm. The enzyme catalyses uridine + ATP = UMP + ADP + H(+). It carries out the reaction cytidine + ATP = CMP + ADP + H(+). The protein operates within pyrimidine metabolism; CTP biosynthesis via salvage pathway; CTP from cytidine: step 1/3. It participates in pyrimidine metabolism; UMP biosynthesis via salvage pathway; UMP from uridine: step 1/1. This chain is Uridine kinase, found in Streptococcus agalactiae serotype III (strain NEM316).